Consider the following 446-residue polypeptide: Glucarate dehydratase (446 aa).

Residues histidine 32, threonine 103, tyrosine 150, and lysine 205 each coordinate substrate. Residue lysine 207 is the Proton acceptor of the active site. Mg(2+) is bound by residues aspartate 235, glutamate 266, and asparagine 289. 235-237 (DPN) provides a ligand contact to substrate. Substrate contacts are provided by residues asparagine 289, 339-341 (HSN), histidine 368, and arginine 422. The Proton acceptor role is filled by histidine 339.

The protein belongs to the mandelate racemase/muconate lactonizing enzyme family. GlucD subfamily. As to quaternary structure, homodimer. Requires Mg(2+) as cofactor.

The catalysed reaction is D-glucarate = 5-dehydro-4-deoxy-D-glucarate + H2O. It participates in carbohydrate acid metabolism; D-glucarate degradation; 2,5-dioxopentanoate from D-glucarate: step 1/2. Catalyzes the dehydration of glucarate to 5-keto-4-deoxy-D-glucarate (5-kdGluc). Also acts on L-idarate. The polypeptide is Glucarate dehydratase (gudD) (Escherichia coli O157:H7).